Here is a 517-residue protein sequence, read N- to C-terminus: Glycerol kinase 5 (517 aa).

ATP is bound by residues S23 and T24. Positions 93, 270, and 271 each coordinate glycerol. ATP is bound by residues T292, G335, and G432.

It belongs to the FGGY kinase family.

The protein localises to the cytoplasm. The enzyme catalyses glycerol + ATP = sn-glycerol 3-phosphate + ADP + H(+). It functions in the pathway polyol metabolism; glycerol degradation via glycerol kinase pathway; sn-glycerol 3-phosphate from glycerol: step 1/1. Functionally, skin-specific kinase that plays a key role in glycerol metabolism, catalyzing its phosphorylation to produce sn-glycerol 3-phosphate. Involved in skin-specific regulation of sterol regulatory element-binding protein (SREBP) processing and lipid biosynthesis. The chain is Glycerol kinase 5 (GK5) from Gallus gallus (Chicken).